We begin with the raw amino-acid sequence, 848 residues long: Adenylate cyclase (848 aa).

Residues 1-535 (MYLYIETLKQ…DVSHHFPLRL (535 aa)) form a catalytic region. Residues 541 to 848 (KALYSPCEIR…DTPLLQQYFS (308 aa)) form a regulatory region. The residue at position 609 (His-609) is a Phosphohistidine; by CRR.

Belongs to the adenylyl cyclase class-1 family.

Its subcellular location is the cytoplasm. The enzyme catalyses ATP = 3',5'-cyclic AMP + diphosphate. The sequence is that of Adenylate cyclase (cyaA) from Shigella flexneri.